We begin with the raw amino-acid sequence, 616 residues long: UvrABC system protein C (616 aa).

The region spanning 21–100 (TCPGVYQFKN…IKDLKPRYNI (80 aa)) is the GIY-YIG domain. In terms of domain architecture, UVR spans 214-249 (GALIRTLSAEMHRYADELRFEEAAELKIQIEGLRKY).

Belongs to the UvrC family. In terms of assembly, interacts with UvrB in an incision complex.

The protein resides in the cytoplasm. The UvrABC repair system catalyzes the recognition and processing of DNA lesions. UvrC both incises the 5' and 3' sides of the lesion. The N-terminal half is responsible for the 3' incision and the C-terminal half is responsible for the 5' incision. The polypeptide is UvrABC system protein C (Prosthecochloris aestuarii (strain DSM 271 / SK 413)).